We begin with the raw amino-acid sequence, 281 residues long: Undecaprenyl-diphosphatase (281 aa).

6 helical membrane passes run 90 to 110, 113 to 133, 147 to 167, 191 to 211, 217 to 237, and 257 to 277; these read WLVT…QDSI, VLRG…VLGA, LSWK…IPGV, SFLL…YDEL, IAWV…YAVI, and IAAA…AFQG.

The protein belongs to the UppP family.

The protein localises to the cell membrane. The enzyme catalyses di-trans,octa-cis-undecaprenyl diphosphate + H2O = di-trans,octa-cis-undecaprenyl phosphate + phosphate + H(+). Catalyzes the dephosphorylation of undecaprenyl diphosphate (UPP). Confers resistance to bacitracin. The chain is Undecaprenyl-diphosphatase from Kineococcus radiotolerans (strain ATCC BAA-149 / DSM 14245 / SRS30216).